We begin with the raw amino-acid sequence, 738 residues long: Protostadienol synthase A (738 aa).

One copy of the PFTB 1 repeat lies at 132–173 (KQEMCRYLLNVVNEDGGWGLFIQSPSTVFGTVMNYCMLRILG). Aspartate 463 (proton donor) is an active-site residue. PFTB repeat units lie at residues 490–531 (LQQA…YENV), 567–607 (VSRS…ACMG), and 616–663 (CQRA…AVIG).

The protein belongs to the terpene cyclase/mutase family.

The enzyme catalyses (S)-2,3-epoxysqualene = (17Z)-protosta-17(20),24-dien-3beta-ol. Its function is as follows. Protostadienol synthase which cyclizes (3S)-oxidosqualene to (17Z)-protosta-17(20),24-dien-3-beta-ol (protostadienol), the biosynthetic precursor of helvolic acid, a secondary metabolite which promotes virulence. The chain is Protostadienol synthase A (pdsA) from Neosartorya fischeri (strain ATCC 1020 / DSM 3700 / CBS 544.65 / FGSC A1164 / JCM 1740 / NRRL 181 / WB 181) (Aspergillus fischerianus).